A 571-amino-acid polypeptide reads, in one-letter code: Potassium-transporting ATPase potassium-binding subunit (571 aa).

Transmembrane regions (helical) follow at residues 5 to 25 (GWTQITLYGAVVLALVKPLGW), 64 to 84 (LGYAGALLLFHVFGFLVLYAI), 136 to 156 (GLTHQNFLSAATGIAVAVALI), 178 to 198 (ILYVLLPICILYTLFLVWQGI), 254 to 274 (LSNFVQMVSIFAIGAALTNVF), 285 to 305 (WAILAAMGALFLAGVAVAYWA), 330 to 350 (FDIAASALFAVVTTAASCGAV), 357 to 379 (FTALGGMIPLVNMQLGEVIIGGV), 421 to 441 (MLGILCLPLMMLGFTALATVL), 488 to 508 (LAVGMLVGRFFVIIPALAIAG), and 527 to 547 (GALFVGLLVGVILIIGGLTFF).

This sequence belongs to the KdpA family. As to quaternary structure, the system is composed of three essential subunits: KdpA, KdpB and KdpC.

It is found in the cell inner membrane. In terms of biological role, part of the high-affinity ATP-driven potassium transport (or Kdp) system, which catalyzes the hydrolysis of ATP coupled with the electrogenic transport of potassium into the cytoplasm. This subunit binds the periplasmic potassium ions and delivers the ions to the membrane domain of KdpB through an intramembrane tunnel. This Methylobacterium nodulans (strain LMG 21967 / CNCM I-2342 / ORS 2060) protein is Potassium-transporting ATPase potassium-binding subunit.